The following is a 210-amino-acid chain: ATP phosphoribosyltransferase (210 aa).

Belongs to the ATP phosphoribosyltransferase family. Short subfamily. Heteromultimer composed of HisG and HisZ subunits.

The protein localises to the cytoplasm. The enzyme catalyses 1-(5-phospho-beta-D-ribosyl)-ATP + diphosphate = 5-phospho-alpha-D-ribose 1-diphosphate + ATP. The protein operates within amino-acid biosynthesis; L-histidine biosynthesis; L-histidine from 5-phospho-alpha-D-ribose 1-diphosphate: step 1/9. Its function is as follows. Catalyzes the condensation of ATP and 5-phosphoribose 1-diphosphate to form N'-(5'-phosphoribosyl)-ATP (PR-ATP). Has a crucial role in the pathway because the rate of histidine biosynthesis seems to be controlled primarily by regulation of HisG enzymatic activity. The sequence is that of ATP phosphoribosyltransferase from Picosynechococcus sp. (strain ATCC 27264 / PCC 7002 / PR-6) (Agmenellum quadruplicatum).